We begin with the raw amino-acid sequence, 254 residues long: Phosphatidylglycerophosphatase B (254 aa).

The helical transmembrane segment at 2–24 (RSIARRTAVGAALLLVMPVAVWI) threads the bilayer. Residues 25 to 54 (SGWRWQPGEQSWLLKAAFWVTETVTQPWGV) lie on the Periplasmic side of the membrane. Residues 55–66 (ITHLILFGWFLW) traverse the membrane as a helical segment. The Cytoplasmic portion of the chain corresponds to 67-71 (CLRFR). The chain crosses the membrane as a helical span at residues 72–94 (IKAAFVLFAILAAAILVGQGVKS). Over 95 to 161 (WIKDKVQEPR…QKETGFAFPS (67 aa)) the chain is Periplasmic. Positions 97–105 (KDKVQEPRP) are phosphatase sequence motif I. The tract at residues 160–163 (PSGH) is phosphatase sequence motif II. The helical transmembrane segment at 162–176 (GHTMFAASWALLAVG) threads the bilayer. His163 functions as the Proton donor; for a subset of substrates in the catalytic mechanism. The Cytoplasmic segment spans residues 177–182 (LLWPRR). The helical transmembrane segment at 183–202 (RTLTIAILLVWATGVMGSRL) threads the bilayer. The phosphatase sequence motif III stretch occupies residues 200-211 (SRLLLGMHWPRD). At 203-208 (LLGMHW) the chain is on the periplasmic side. His207 (nucleophile) is an active-site residue. A helical membrane pass occupies residues 209-232 (PRDLVVATLISWALVAVATWLAQR). Residues 233–254 (ICGPLTPPAEENREIAQREQES) are Cytoplasmic-facing.

This sequence belongs to the PA-phosphatase related phosphoesterase family. The N-terminus is blocked.

It localises to the cell inner membrane. The protein localises to the cell outer membrane. It catalyses the reaction a 1,2-diacyl-sn-glycero-3-phospho-(1'-sn-glycero-3'-phosphate) + H2O = a 1,2-diacyl-sn-glycero-3-phospho-(1'-sn-glycerol) + phosphate. It carries out the reaction a 1,2-diacyl-sn-glycerol 3-diphosphate + H2O = a 1,2-diacyl-sn-glycero-3-phosphate + phosphate + H(+). The enzyme catalyses a 1,2-diacyl-sn-glycero-3-phosphate + H2O = a 1,2-diacyl-sn-glycerol + phosphate. The catalysed reaction is di-trans,octa-cis-undecaprenyl diphosphate + H2O = di-trans,octa-cis-undecaprenyl phosphate + phosphate + H(+). Its pathway is phospholipid metabolism; phosphatidylglycerol biosynthesis; phosphatidylglycerol from CDP-diacylglycerol: step 2/2. Functionally, catalyzes the dephosphorylation of diacylglycerol diphosphate (DGPP) to phosphatidate (PA) and the subsequent dephosphorylation of PA to diacylglycerol (DAG). Also has undecaprenyl pyrophosphate phosphatase activity, required for the biosynthesis of the lipid carrier undecaprenyl phosphate. Can also use lysophosphatidic acid (LPA) and phosphatidylglycerophosphate as substrates. The pattern of activities varies according to subcellular location, PGP phosphatase activity is higher in the cytoplasmic membrane, whereas PA and LPA phosphatase activities are higher in the outer membrane. Activity is independent of a divalent cation ion and insensitive to inhibition by N-ethylmaleimide. In Escherichia coli O157:H7, this protein is Phosphatidylglycerophosphatase B (pgpB).